Reading from the N-terminus, the 175-residue chain is Large ribosomal subunit protein uL22y (175 aa).

Basic and acidic residues predominate over residues 153-163 (EKEEPVKKEPE). The disordered stretch occupies residues 153–175 (EKEEPVKKEPETQLAAKSKKSAA).

The protein belongs to the universal ribosomal protein uL22 family.

The chain is Large ribosomal subunit protein uL22y (RPL17B) from Arabidopsis thaliana (Mouse-ear cress).